Consider the following 262-residue polypeptide: tRNA pseudouridine synthase A (262 aa).

Catalysis depends on Asp51, which acts as the Nucleophile. Tyr109 provides a ligand contact to substrate.

This sequence belongs to the tRNA pseudouridine synthase TruA family. In terms of assembly, homodimer.

It catalyses the reaction uridine(38/39/40) in tRNA = pseudouridine(38/39/40) in tRNA. Its function is as follows. Formation of pseudouridine at positions 38, 39 and 40 in the anticodon stem and loop of transfer RNAs. The protein is tRNA pseudouridine synthase A of Aliivibrio fischeri (strain ATCC 700601 / ES114) (Vibrio fischeri).